A 163-amino-acid polypeptide reads, in one-letter code: Thiol peroxidase (163 aa).

Residues 16-162 (LQVGDTAHDF…YDAAIAAVKN (147 aa)) enclose the Thioredoxin domain. The active-site Cysteine sulfenic acid (-SOH) intermediate is the Cys58. A disulfide bridge links Cys58 with Cys92.

It belongs to the peroxiredoxin family. Tpx subfamily. Homodimer.

It carries out the reaction a hydroperoxide + [thioredoxin]-dithiol = an alcohol + [thioredoxin]-disulfide + H2O. Its function is as follows. Thiol-specific peroxidase that catalyzes the reduction of hydrogen peroxide and organic hydroperoxides to water and alcohols, respectively. Plays a role in cell protection against oxidative stress by detoxifying peroxides. The sequence is that of Thiol peroxidase from Streptococcus gordonii.